Here is a 238-residue protein sequence, read N- to C-terminus: MKSLHAVNLVLLLLLACFAPAPATRELNLRAAASDSTRVVDNATTERLLRAHSSGKEEQKEEEERAISINFPSLEKILKNVTSGKSTELQGMLKADEALGSAFKTLKLSTMRIGKDDTKMVAKFLSSRNFKIWFQHAVKINKDDPYGEMLKALTNVFGEKNVAMMILVGNLSRNSRDVAKKLEKAQFYKWYFVDKYKTADEVFTNVLKADRNRIHGYGREKEIWGDYAKYVTTTVMKY.

The first 23 residues, 1 to 23 (MKSLHAVNLVLLLLLACFAPAPA), serve as a signal peptide directing secretion. A RxLR-dEER motif is present at residues 47 to 65 (RLLRAHSSGKEEQKEEEER).

Belongs to the RxLR effector family.

Its subcellular location is the secreted. It is found in the host cytoplasm. The protein localises to the host cytoskeleton. The protein resides in the host nucleus. It localises to the host nucleolus. In terms of biological role, effector that enhances P.infestans colonization of Nicotiana benthamiana leaves. This chain is RxLR effector protein PITG_14788, found in Phytophthora infestans (strain T30-4) (Potato late blight agent).